Consider the following 190-residue polypeptide: Outer-membrane lipoprotein LolB (190 aa).

An N-terminal signal peptide occupies residues 1 to 16 (MRLRFSLLLTVSLLAG). Residue Cys17 is the site of N-palmitoyl cysteine attachment. Cys17 carries the S-diacylglycerol cysteine lipid modification.

It belongs to the LolB family. Monomer.

It localises to the cell outer membrane. Functionally, plays a critical role in the incorporation of lipoproteins in the outer membrane after they are released by the LolA protein. The sequence is that of Outer-membrane lipoprotein LolB from Dechloromonas aromatica (strain RCB).